The primary structure comprises 210 residues: N-(5'-phosphoribosyl)anthranilate isomerase (210 aa).

Belongs to the TrpF family.

The enzyme catalyses N-(5-phospho-beta-D-ribosyl)anthranilate = 1-(2-carboxyphenylamino)-1-deoxy-D-ribulose 5-phosphate. It functions in the pathway amino-acid biosynthesis; L-tryptophan biosynthesis; L-tryptophan from chorismate: step 3/5. This is N-(5'-phosphoribosyl)anthranilate isomerase from Pseudomonas fluorescens (strain ATCC BAA-477 / NRRL B-23932 / Pf-5).